The primary structure comprises 105 residues: Large ribosomal subunit protein uL24 (105 aa).

It belongs to the universal ribosomal protein uL24 family. In terms of assembly, part of the 50S ribosomal subunit.

Functionally, one of two assembly initiator proteins, it binds directly to the 5'-end of the 23S rRNA, where it nucleates assembly of the 50S subunit. In terms of biological role, one of the proteins that surrounds the polypeptide exit tunnel on the outside of the subunit. The polypeptide is Large ribosomal subunit protein uL24 (Vibrio parahaemolyticus serotype O3:K6 (strain RIMD 2210633)).